The primary structure comprises 559 residues: GTP diphosphokinase CRSH2, chloroplastic (559 aa).

A chloroplast-targeting transit peptide spans 1 to 37 (MASAGGEVVVVDPAAAAVAPDVEHHAPAPRLTPAGSG). In terms of domain architecture, HD spans 87–187 (SLARALIVAA…LELAIRLDAM (101 aa)). EF-hand domains lie at 449–484 (ASAG…LGAG) and 486–518 (KDAE…VELK). Ca(2+)-binding residues include Asp-462, Asn-464, Asp-466, Arg-468, Glu-473, Asp-496, Asn-498, Asp-500, Ser-502, and Glu-507.

It belongs to the RelA/SpoT family. As to expression, expressed in shoots.

It is found in the plastid. It localises to the chloroplast. It catalyses the reaction GTP + ATP = guanosine 3'-diphosphate 5'-triphosphate + AMP. With respect to regulation, activated by calcium. In terms of biological role, possesses calcium-dependent ppGpp (guanosine 3'-diphosphate 5'-diphosphate) synthetase activity in vitro and is able to functionally complement E.coli relA mutants. May be involved in a rapid plant ppGpp-mediated response to pathogens and other stresses. The polypeptide is GTP diphosphokinase CRSH2, chloroplastic (Oryza sativa subsp. japonica (Rice)).